A 625-amino-acid polypeptide reads, in one-letter code: Interferon-induced GTP-binding protein MxE (625 aa).

The Dynamin-type G domain occupies D40–P313. The tract at residues G50 to S57 is G1 motif. G50–S57 contacts GTP. Residues V75 to R77 form a G2 motif region. The G3 motif stretch occupies residues D151–G154. GTP is bound by residues D151–I155 and T220–D223. Positions T220 to D223 are G4 motif. A G5 motif region spans residues K252–G255. Residues V536–A625 enclose the GED domain.

Belongs to the TRAFAC class dynamin-like GTPase superfamily. Dynamin/Fzo/YdjA family.

The protein resides in the cytoplasm. The sequence is that of Interferon-induced GTP-binding protein MxE (mxe) from Danio rerio (Zebrafish).